Here is a 48-residue protein sequence, read N- to C-terminus: MFPSTNQEVLALLPEAYAPFDPIVDVLPIIPLLFLLLAFVWQASVKFR.

A propeptide spanning residues 1 to 11 (MFPSTNQEVLA) is cleaved from the precursor. The chain crosses the membrane as a helical span at residues 23–43 (IVDVLPIIPLLFLLLAFVWQA).

It belongs to the PsbK family. As to quaternary structure, PSII is composed of 1 copy each of membrane proteins PsbA, PsbB, PsbC, PsbD, PsbE, PsbF, PsbH, PsbI, PsbJ, PsbK, PsbL, PsbM, PsbT, PsbY, PsbZ, Psb30/Ycf12, at least 3 peripheral proteins of the oxygen-evolving complex and a large number of cofactors. It forms dimeric complexes.

It localises to the plastid. The protein localises to the chloroplast thylakoid membrane. Its function is as follows. One of the components of the core complex of photosystem II (PSII). PSII is a light-driven water:plastoquinone oxidoreductase that uses light energy to abstract electrons from H(2)O, generating O(2) and a proton gradient subsequently used for ATP formation. It consists of a core antenna complex that captures photons, and an electron transfer chain that converts photonic excitation into a charge separation. This Euglena sanguinea protein is Photosystem II reaction center protein K.